The following is a 1172-amino-acid chain: Serine/threonine-protein kinase Nek10 (1172 aa).

An ARM repeat occupies 209–251; it reads GAHKTLVNLLGARDTNVLLGSLLALASLAESQECREKISELNI. Residues 481-514 adopt a coiled-coil conformation; the sequence is YEELVSKLNLLVEDELKQIAENIESINQNKAPLK. The region spanning 519–712 is the Protein kinase domain; the sequence is YAILDHLGSG…SEPYGEKADV (194 aa). ATP contacts are provided by residues 525 to 533 and lysine 548; that span reads LGSGAFGCV. Residue aspartate 655 is the Proton acceptor of the active site. Disordered stretches follow at residues 855 to 875 and 898 to 954; these read SELS…YGKD and TYSE…GSRP. A compositionally biased stretch (polar residues) spans 919–945; sequence PLKESTFNILKRSFSASGGERQSQTRD.

This sequence belongs to the protein kinase superfamily. NEK Ser/Thr protein kinase family. NIMA subfamily. Interacts with RAF1 and MAP2K1; the interaction is direct with RAF1 and required for ERK1/2-signaling pathway activation in response to UV irradiation. Mg(2+) is required as a cofactor. As to expression, expressed in the lung.

The enzyme catalyses L-seryl-[protein] + ATP = O-phospho-L-seryl-[protein] + ADP + H(+). It carries out the reaction L-threonyl-[protein] + ATP = O-phospho-L-threonyl-[protein] + ADP + H(+). In terms of biological role, plays a role in the cellular response to UV irradiation. Mediates G2/M cell cycle arrest, MEK autoactivation and ERK1/2-signaling pathway activation in response to UV irradiation. In ciliated cells of airways, it is involved in the regulation of mucociliary transport. This chain is Serine/threonine-protein kinase Nek10, found in Homo sapiens (Human).